A 180-amino-acid polypeptide reads, in one-letter code: ATP synthase subunit delta (180 aa).

This sequence belongs to the ATPase delta chain family. In terms of assembly, F-type ATPases have 2 components, F(1) - the catalytic core - and F(0) - the membrane proton channel. F(1) has five subunits: alpha(3), beta(3), gamma(1), delta(1), epsilon(1). F(0) has three main subunits: a(1), b(2) and c(10-14). The alpha and beta chains form an alternating ring which encloses part of the gamma chain. F(1) is attached to F(0) by a central stalk formed by the gamma and epsilon chains, while a peripheral stalk is formed by the delta and b chains.

It localises to the cell membrane. Functionally, f(1)F(0) ATP synthase produces ATP from ADP in the presence of a proton or sodium gradient. F-type ATPases consist of two structural domains, F(1) containing the extramembraneous catalytic core and F(0) containing the membrane proton channel, linked together by a central stalk and a peripheral stalk. During catalysis, ATP synthesis in the catalytic domain of F(1) is coupled via a rotary mechanism of the central stalk subunits to proton translocation. This protein is part of the stalk that links CF(0) to CF(1). It either transmits conformational changes from CF(0) to CF(1) or is implicated in proton conduction. The protein is ATP synthase subunit delta of Lactobacillus delbrueckii subsp. bulgaricus (strain ATCC BAA-365 / Lb-18).